A 331-amino-acid chain; its full sequence is 6-phosphogluconolactonase (331 aa).

Belongs to the cycloisomerase 2 family.

It carries out the reaction 6-phospho-D-glucono-1,5-lactone + H2O = 6-phospho-D-gluconate + H(+). Its pathway is carbohydrate degradation; pentose phosphate pathway; D-ribulose 5-phosphate from D-glucose 6-phosphate (oxidative stage): step 2/3. Catalyzes the hydrolysis of 6-phosphogluconolactone to 6-phosphogluconate. The polypeptide is 6-phosphogluconolactonase (Citrobacter koseri (strain ATCC BAA-895 / CDC 4225-83 / SGSC4696)).